The following is a 342-amino-acid chain: Isopentenyl-diphosphate delta-isomerase (342 aa).

11–12 contacts substrate; that stretch reads RK. Residues Ser68, 69 to 71, Ser99, and Asn127 each bind FMN; that span reads SMT. Residue 99-101 participates in substrate binding; the sequence is SMR. Gln162 provides a ligand contact to substrate. Glu163 provides a ligand contact to Mg(2+). FMN-binding positions include Lys194, Thr224, 274–276, and 295–296; these read GFK and AG.

Belongs to the IPP isomerase type 2 family. As to quaternary structure, homooctamer. Dimer of tetramers. The cofactor is FMN. NADPH serves as cofactor. Requires Mg(2+) as cofactor.

It is found in the cytoplasm. It catalyses the reaction isopentenyl diphosphate = dimethylallyl diphosphate. In terms of biological role, involved in the biosynthesis of isoprenoids. Catalyzes the 1,3-allylic rearrangement of the homoallylic substrate isopentenyl (IPP) to its allylic isomer, dimethylallyl diphosphate (DMAPP). The protein is Isopentenyl-diphosphate delta-isomerase of Rickettsia conorii (strain ATCC VR-613 / Malish 7).